Reading from the N-terminus, the 80-residue chain is uncharacterized protein (80 aa).

Transmembrane regions (helical) follow at residues 15 to 35 and 45 to 65; these read ALGLTLLYLAVWLVAAYLSGV and WFEMACILTPLLFIGLCWAMV.

This sequence to H.influenzae HI_0974B.

The protein localises to the cell membrane. This is an uncharacterized protein from Escherichia coli (strain K12).